Here is a 116-residue protein sequence, read N- to C-terminus: Large ribosomal subunit protein bL19 (116 aa).

The protein belongs to the bacterial ribosomal protein bL19 family.

Functionally, this protein is located at the 30S-50S ribosomal subunit interface and may play a role in the structure and function of the aminoacyl-tRNA binding site. The polypeptide is Large ribosomal subunit protein bL19 (Shewanella loihica (strain ATCC BAA-1088 / PV-4)).